The sequence spans 273 residues: 2,3,4,5-tetrahydropyridine-2,6-dicarboxylate N-succinyltransferase (273 aa).

2 residues coordinate substrate: Arg-104 and Asp-141.

The protein belongs to the transferase hexapeptide repeat family. In terms of assembly, homotrimer.

The protein resides in the cytoplasm. It catalyses the reaction (S)-2,3,4,5-tetrahydrodipicolinate + succinyl-CoA + H2O = (S)-2-succinylamino-6-oxoheptanedioate + CoA. Its pathway is amino-acid biosynthesis; L-lysine biosynthesis via DAP pathway; LL-2,6-diaminopimelate from (S)-tetrahydrodipicolinate (succinylase route): step 1/3. The sequence is that of 2,3,4,5-tetrahydropyridine-2,6-dicarboxylate N-succinyltransferase from Acinetobacter baylyi (strain ATCC 33305 / BD413 / ADP1).